The following is an 880-amino-acid chain: MEGGGKPNSSSNSRDDGNSVFPAKAPATGAGPAAAEKRLGTPPGGGGAGAKEHGNSVCFKVDGGGGGGEESAGGLEDAEGPRRQYGFMQRQFTSMLQPGVNKFSLRMFGSQKAVEKEQERVKTAGFWIIHSYSDFRFYWDLIMLIMMVGNLVIIPVGITFFTEQTTTPWIIFNVASDTVFLLDLIMNFRTGTVNEDSSEIILDPKVIKMNYLKSWFVVDFISSIPVDYIFLIVEKGMDSEVYKTARALRIVRFTKILSLLRLLRLSRLIRYIHQWEEIFHMTYDLASAVVRIFNLIGMMLLLCHWDGCLQFLVPLLQDFPPDCWVSLNEMVNDSWGKQYSYALFKAMSHMLCIGYGAQAPVSMSDLWITMLSMIVGATCYAMFVGHATALIQSLDSSRRQYQEKYKQVEQYMSFHKLPADMRQKIHDYYEHRYQGKIFDEENILNELNDPLREEIVNFNCRKLVATMPLFANADPNFVTAMLSKLRFEVFQPGDYIIREGAVGKKMYFIQHGVAGVITKSSKEMKLTDGSYFGEICLLTKGRRTASVRADTYCRLYSLSVDNFNEVLEEYPMMRRAFETVAIDRLDRIGKKNSILLQKFQKDLNTGVFNNQENEILKQIVKHDREMVQAIAPISYPQMTALNSTSSTATPTSRMRTQSPPVYTATSLSHSNLHSPSPSTQTPQPSAILSPCSYTTAVCSPPVQSPLATRTFHYASPTASQLSLMPQQQQQPQAPQTQPQQPPQQPQTPGSATPKNEVHRSTQALPNTSLTREVRPLSASQPSLPHEVSTLISRPHPTVGESLASIPQPVAAVHSAGLQAAGRSTVPQRVTLFRQMSSGAIPPNRGVPPAPPPPAAPLQREASSVLNTDPEAEKPRFASNL.

The disordered stretch occupies residues 1 to 80; sequence MEGGGKPNSS…SAGGLEDAEG (80 aa). Residues 1–136 are Cytoplasmic-facing; that stretch reads MEGGGKPNSS…WIIHSYSDFR (136 aa). A compositionally biased stretch (low complexity) spans 8–34; it reads NSSSNSRDDGNSVFPAKAPATGAGPAA. A compositionally biased stretch (gly residues) spans 62-71; sequence DGGGGGGEES. The helical transmembrane segment at 137–158 threads the bilayer; the sequence is FYWDLIMLIMMVGNLVIIPVGI. The Extracellular portion of the chain corresponds to 159 to 167; the sequence is TFFTEQTTT. A helical transmembrane segment spans residues 168–188; that stretch reads PWIIFNVASDTVFLLDLIMNF. At 189–209 the chain is on the cytoplasmic side; the sequence is RTGTVNEDSSEIILDPKVIKM. The helical transmembrane segment at 210 to 230 threads the bilayer; that stretch reads NYLKSWFVVDFISSIPVDYIF. Over 231 to 254 the chain is Extracellular; it reads LIVEKGMDSEVYKTARALRIVRFT. Residues 255–275 form a helical; Voltage-sensor membrane-spanning segment; sequence KILSLLRLLRLSRLIRYIHQW. The Cytoplasmic segment spans residues 276–289; sequence EEIFHMTYDLASAV. A helical transmembrane segment spans residues 290–312; it reads VRIFNLIGMMLLLCHWDGCLQFL. The Extracellular portion of the chain corresponds to 313 to 338; the sequence is VPLLQDFPPDCWVSLNEMVNDSWGKQ. Residue Asn-332 is glycosylated (N-linked (GlcNAc...) asparagine). The segment at residues 339 to 360 is an intramembrane region (pore-forming); it reads YSYALFKAMSHMLCIGYGAQAP. The Selectivity filter motif lies at 352-356; the sequence is CIGYG. Residues 361-365 are Extracellular-facing; it reads VSMSD. The helical transmembrane segment at 366-386 threads the bilayer; it reads LWITMLSMIVGATCYAMFVGH. Topologically, residues 387 to 880 are cytoplasmic; the sequence is ATALIQSLDS…AEKPRFASNL (494 aa). 3',5'-cyclic AMP is bound by residues Gly-533, Glu-534, Cys-536, Arg-543, Thr-544, Arg-584, and Arg-587. The segment covering 641–664 has biased composition (polar residues); sequence LNSTSSTATPTSRMRTQSPPVYTA. Disordered regions lie at residues 641–686, 718–786, and 835–880; these read LNST…QPSA, ASQL…LPHE, and MSSG…ASNL. 2 stretches are compositionally biased toward low complexity: residues 665–685 and 725–738; these read TSLSHSNLHSPSPSTQTPQPS and PQQQQQPQAPQTQP. A compositionally biased stretch (polar residues) spans 760 to 770; sequence STQALPNTSLT. Residues 844-855 show a composition bias toward pro residues; the sequence is RGVPPAPPPPAA. Residues 870–880 show a composition bias toward basic and acidic residues; the sequence is EAEKPRFASNL.

The protein belongs to the potassium channel HCN family. Homotetramer. Heterotetramer with HCN2. The potassium channel is composed of a homo- or heterotetrameric complex of pore-forming subunits. Interacts with KCNE2. Interacts with the SH3 domain of CSK. Detected in myocytes in heart sinoatrial node (SAN) and in brain, in particular in the granule cell layer and in Purkinje neuron bodies in the cerebellum.

It localises to the cell membrane. It catalyses the reaction Na(+)(in) = Na(+)(out). It carries out the reaction K(+)(in) = K(+)(out). Activated by cAMP. cAMP binding promotes tetramerization and formation of an active channel. Compared to other family members, cAMP has less stimulatory effect on HCN1 because part of the molecules already contain bound cAMP and form homotetramers when cAMP levels are low, this inherent tetramerization in HCN1 results in a weaker response to increased cAMP. In terms of biological role, hyperpolarization-activated ion channel that are permeable to sodium and potassium ions. Exhibits weak selectivity for potassium over sodium ions. Contributes to the native pacemaker currents in heart (If) and in neurons (Ih). Participates in cerebellar mechanisms of motor learning. May mediate responses to sour stimuli. The polypeptide is Potassium/sodium hyperpolarization-activated cyclic nucleotide-gated channel 1 (HCN1) (Oryctolagus cuniculus (Rabbit)).